Here is a 170-residue protein sequence, read N- to C-terminus: Ribosome maturation factor RimM (170 aa).

The PRC barrel domain occupies 98-170 (PDEYYWVDLE…LIVVDWDPDF (73 aa)).

This sequence belongs to the RimM family. Binds ribosomal protein uS19.

It localises to the cytoplasm. Its function is as follows. An accessory protein needed during the final step in the assembly of 30S ribosomal subunit, possibly for assembly of the head region. Essential for efficient processing of 16S rRNA. May be needed both before and after RbfA during the maturation of 16S rRNA. It has affinity for free ribosomal 30S subunits but not for 70S ribosomes. This chain is Ribosome maturation factor RimM, found in Xanthomonas campestris pv. campestris (strain 8004).